The sequence spans 398 residues: Elongation factor Tu (398 aa).

In terms of domain architecture, tr-type G spans 10–207 (KPHVNIGTIG…TVDEYIPEPE (198 aa)). Residues 19-26 (GHVDHGKT) form a G1 region. GTP is bound at residue 19–26 (GHVDHGKT). T26 contributes to the Mg(2+) binding site. The G2 stretch occupies residues 63-67 (GITIN). The interval 84 to 87 (DAPG) is G3. Residues 84-88 (DAPGH) and 139-142 (NKVD) each bind GTP. Residues 139 to 142 (NKVD) form a G4 region. The segment at 177–179 (SAL) is G5.

Belongs to the TRAFAC class translation factor GTPase superfamily. Classic translation factor GTPase family. EF-Tu/EF-1A subfamily. In terms of assembly, monomer.

It is found in the cytoplasm. The enzyme catalyses GTP + H2O = GDP + phosphate + H(+). GTP hydrolase that promotes the GTP-dependent binding of aminoacyl-tRNA to the A-site of ribosomes during protein biosynthesis. The chain is Elongation factor Tu from Streptococcus thermophilus (strain CNRZ 1066).